Consider the following 502-residue polypeptide: UDP-N-acetylmuramoylalanine--D-glutamate ligase (502 aa).

129-135 (GTNGKTT) serves as a coordination point for ATP.

It belongs to the MurCDEF family.

The protein localises to the cytoplasm. The catalysed reaction is UDP-N-acetyl-alpha-D-muramoyl-L-alanine + D-glutamate + ATP = UDP-N-acetyl-alpha-D-muramoyl-L-alanyl-D-glutamate + ADP + phosphate + H(+). It participates in cell wall biogenesis; peptidoglycan biosynthesis. Its function is as follows. Cell wall formation. Catalyzes the addition of glutamate to the nucleotide precursor UDP-N-acetylmuramoyl-L-alanine (UMA). The protein is UDP-N-acetylmuramoylalanine--D-glutamate ligase of Burkholderia ambifaria (strain MC40-6).